We begin with the raw amino-acid sequence, 67 residues long: Conotoxin Cl6.7 (67 aa).

Positions 1–24 (MKVTAVLMVAVLVLTACQLTTANT) are cleaved as a signal peptide. Positions 25-39 (TDYVRRIPARKSTMS) are excised as a propeptide. 3 disulfide bridges follow: cysteine 43–cysteine 58, cysteine 50–cysteine 62, and cysteine 57–cysteine 66.

The protein belongs to the conotoxin O1 superfamily. In terms of tissue distribution, expressed by the venom duct.

It localises to the secreted. The polypeptide is Conotoxin Cl6.7 (Californiconus californicus (California cone)).